The following is a 273-amino-acid chain: 4-hydroxy-tetrahydrodipicolinate reductase (273 aa).

Residues 8–13, Glu34, 102–104, and 128–131 each bind NAD(+); these read GACGRM, GTT, and APNM. The active-site Proton donor/acceptor is the His160. (S)-2,3,4,5-tetrahydrodipicolinate is bound at residue His161. The active-site Proton donor is the Lys164. 170-171 lines the (S)-2,3,4,5-tetrahydrodipicolinate pocket; the sequence is GT.

The protein belongs to the DapB family.

The protein localises to the cytoplasm. The catalysed reaction is (S)-2,3,4,5-tetrahydrodipicolinate + NAD(+) + H2O = (2S,4S)-4-hydroxy-2,3,4,5-tetrahydrodipicolinate + NADH + H(+). It catalyses the reaction (S)-2,3,4,5-tetrahydrodipicolinate + NADP(+) + H2O = (2S,4S)-4-hydroxy-2,3,4,5-tetrahydrodipicolinate + NADPH + H(+). It participates in amino-acid biosynthesis; L-lysine biosynthesis via DAP pathway; (S)-tetrahydrodipicolinate from L-aspartate: step 4/4. Catalyzes the conversion of 4-hydroxy-tetrahydrodipicolinate (HTPA) to tetrahydrodipicolinate. This Methanothermobacter thermautotrophicus (strain ATCC 29096 / DSM 1053 / JCM 10044 / NBRC 100330 / Delta H) (Methanobacterium thermoautotrophicum) protein is 4-hydroxy-tetrahydrodipicolinate reductase.